A 919-amino-acid polypeptide reads, in one-letter code: MFS-type transporter clz9 (919 aa).

Positions 1–11 are enriched in polar residues; the sequence is MAASTKPTTKL. A disordered region spans residues 1–33; that stretch reads MAASTKPTTKLSTEEDDVSRRDSESSADFMKSN. Residues 69 to 89 traverse the membrane as a helical segment; it reads VVASFAAAISPFSTSTYYPVV. Asn-104 carries N-linked (GlcNAc...) asparagine glycosylation. 3 helical membrane-spanning segments follow: residues 132 to 152, 192 to 212, and 222 to 242; these read PMFL…ALQN, LIYA…IGGL, and VFWF…IFFG. N-linked (GlcNAc...) asparagine glycosylation is present at Asn-260. 4 helical membrane-spanning segments follow: residues 303–323, 333–353, 393–413, and 418–438; these read FILS…TSVL, YDAV…LLAY, LGFV…YGWQ, and APLA…TGVM. Asn-461 is a glycosylation site (N-linked (GlcNAc...) asparagine). Residues 465–485 form a helical membrane-spanning segment; it reads LLLGAGAVAVVGPLNKSAGIG. The 169-residue stretch at 641 to 809 folds into the DDE-1 domain; that stretch reads REWVTLIQGI…FTSANICSSF (169 aa). Residues 840–897 are disordered; the sequence is EAPWEAKTPSNRKKKQIQKRGTLTKGEGEDTLAQKEADQQIEREQRQGGEQSGRSRQA. A compositionally biased stretch (basic and acidic residues) spans 865 to 886; that stretch reads GEGEDTLAQKEADQQIEREQRQ. Low complexity predominate over residues 887 to 896; the sequence is GGEQSGRSRQ. Residue Asn-915 is glycosylated (N-linked (GlcNAc...) asparagine).

It belongs to the major facilitator superfamily. CAR1 family.

It localises to the membrane. Functionally, MFS-type transporter; part of the gene cluster that mediates the biosynthesis of squalestatin S1 (SQS1, also known as zaragozic acid A), a heavily oxidized fungal polyketide that offers potent cholesterol lowering activity by targeting squalene synthase (SS). This is MFS-type transporter clz9 from Cochliobolus lunatus (Filamentous fungus).